Here is a 373-residue protein sequence, read N- to C-terminus: Ribosomal RNA small subunit methyltransferase H (373 aa).

Residues G92–H94, D111, Y138, D159, and Q166 each bind S-adenosyl-L-methionine. Basic and acidic residues-rich tracts occupy residues A343–P355 and R363–S373. Positions A343–S373 are disordered.

This sequence belongs to the methyltransferase superfamily. RsmH family.

It is found in the cytoplasm. The catalysed reaction is cytidine(1402) in 16S rRNA + S-adenosyl-L-methionine = N(4)-methylcytidine(1402) in 16S rRNA + S-adenosyl-L-homocysteine + H(+). In terms of biological role, specifically methylates the N4 position of cytidine in position 1402 (C1402) of 16S rRNA. The chain is Ribosomal RNA small subunit methyltransferase H from Mycolicibacterium smegmatis (strain ATCC 700084 / mc(2)155) (Mycobacterium smegmatis).